The sequence spans 58 residues: Succinate dehydrogenase subunit 8B, mitochondrial (58 aa).

In terms of assembly, component of complex II composed of eight subunits in plants: four classical SDH subunits SDH1, SDH2, SDH3 and SDH4 (a flavoprotein (FP), an iron-sulfur protein (IP), and a cytochrome b composed of a large and a small subunit.), as well as four subunits unknown in mitochondria from bacteria and heterotrophic eukaryotes.

The protein localises to the mitochondrion inner membrane. Its pathway is carbohydrate metabolism; tricarboxylic acid cycle. This is Succinate dehydrogenase subunit 8B, mitochondrial from Oryza sativa subsp. japonica (Rice).